We begin with the raw amino-acid sequence, 160 residues long: Endoplasmic reticulum transmembrane protein 2 (160 aa).

Topologically, residues 1-2 (MG) are lumenal. Residues 3–23 (VYLAVLFSLLVIEMAILFILV) form a helical membrane-spanning segment. Over 24–45 (LPLPQRMRRWLYIRYSIISTNK) the chain is Cytoplasmic. A helical membrane pass occupies residues 46–66 (KFRTYMVGIMIFVGLLFIDSW). Residues 67 to 103 (KRSQIRVSTYRNQKNPYIINSVTPVDALASRAYNQRN) are Lumenal-facing. A helical membrane pass occupies residues 104-124 (VYISGFIIYFYICILTVMSIL). At 125-160 (RRIVEWNDKMKAGDDILKEKLRRKQKYLEELQKKKF) the chain is on the cytoplasmic side. The short motif at 157–160 (KKKF) is the Di-lysine motif element.

It belongs to the BCAP29/BCAP31 family.

Its subcellular location is the endoplasmic reticulum membrane. Its function is as follows. May play a role in anterograde transport of membrane proteins from the endoplasmic reticulum to the Golgi. This is Endoplasmic reticulum transmembrane protein 2 (YET2) from Saccharomyces cerevisiae (strain ATCC 204508 / S288c) (Baker's yeast).